A 151-amino-acid polypeptide reads, in one-letter code: Transcription elongation factor GreA (151 aa).

The stretch at 41 to 62 forms a coiled coil; that stretch reads AEYHAAREKQSFIEGRIKELEA.

It belongs to the GreA/GreB family.

Its function is as follows. Necessary for efficient RNA polymerase transcription elongation past template-encoded arresting sites. The arresting sites in DNA have the property of trapping a certain fraction of elongating RNA polymerases that pass through, resulting in locked ternary complexes. Cleavage of the nascent transcript by cleavage factors such as GreA or GreB allows the resumption of elongation from the new 3'terminus. GreA releases sequences of 2 to 3 nucleotides. The chain is Transcription elongation factor GreA from Cereibacter sphaeroides (strain ATCC 17023 / DSM 158 / JCM 6121 / CCUG 31486 / LMG 2827 / NBRC 12203 / NCIMB 8253 / ATH 2.4.1.) (Rhodobacter sphaeroides).